The primary structure comprises 239 residues: 1-(5-phosphoribosyl)-5-[(5-phosphoribosylamino)methylideneamino] imidazole-4-carboxamide isomerase (239 aa).

The active-site Proton acceptor is aspartate 8. Aspartate 129 serves as the catalytic Proton donor.

It belongs to the HisA/HisF family.

Its subcellular location is the cytoplasm. It catalyses the reaction 1-(5-phospho-beta-D-ribosyl)-5-[(5-phospho-beta-D-ribosylamino)methylideneamino]imidazole-4-carboxamide = 5-[(5-phospho-1-deoxy-D-ribulos-1-ylimino)methylamino]-1-(5-phospho-beta-D-ribosyl)imidazole-4-carboxamide. Its pathway is amino-acid biosynthesis; L-histidine biosynthesis; L-histidine from 5-phospho-alpha-D-ribose 1-diphosphate: step 4/9. The sequence is that of 1-(5-phosphoribosyl)-5-[(5-phosphoribosylamino)methylideneamino] imidazole-4-carboxamide isomerase from Pelagibacter ubique (strain HTCC1062).